Consider the following 587-residue polypeptide: Proteasome-associated ATPase (587 aa).

Positions 1 to 94 (MAARDDAEAR…KEEVDRLAQP (94 aa)) form a coiled coil. Residue 276–281 (GCGKTL) participates in ATP binding. Residues 586 to 587 (YL) form a docks into pockets in the proteasome alpha-ring region.

The protein belongs to the AAA ATPase family. In terms of assembly, homohexamer. Assembles into a hexameric ring structure that caps the 20S proteasome core. Strongly interacts with the prokaryotic ubiquitin-like protein Pup through a hydrophobic interface; the interacting region of ARC lies in its N-terminal coiled-coil domain. There is one Pup binding site per ARC hexamer ring. Upon ATP-binding, the C-terminus of ARC interacts with the alpha-rings of the proteasome core, possibly by binding to the intersubunit pockets.

It functions in the pathway protein degradation; proteasomal Pup-dependent pathway. Functionally, ATPase which is responsible for recognizing, binding, unfolding and translocation of pupylated proteins into the bacterial 20S proteasome core particle. May be essential for opening the gate of the 20S proteasome via an interaction with its C-terminus, thereby allowing substrate entry and access to the site of proteolysis. Thus, the C-termini of the proteasomal ATPase may function like a 'key in a lock' to induce gate opening and therefore regulate proteolysis. In Streptosporangium roseum (strain ATCC 12428 / DSM 43021 / JCM 3005 / KCTC 9067 / NCIMB 10171 / NRRL 2505 / NI 9100), this protein is Proteasome-associated ATPase.